A 318-amino-acid chain; its full sequence is D-alanine--D-alanine ligase (318 aa).

The ATP-grasp domain occupies lysine 116 to alanine 311. Serine 142 to threonine 197 contributes to the ATP binding site. Residues aspartate 265, glutamate 278, and asparagine 280 each contribute to the Mg(2+) site.

This sequence belongs to the D-alanine--D-alanine ligase family. Mg(2+) is required as a cofactor. It depends on Mn(2+) as a cofactor.

The protein localises to the cytoplasm. It catalyses the reaction 2 D-alanine + ATP = D-alanyl-D-alanine + ADP + phosphate + H(+). It participates in cell wall biogenesis; peptidoglycan biosynthesis. In terms of biological role, cell wall formation. The protein is D-alanine--D-alanine ligase of Pseudomonas entomophila (strain L48).